The following is a 590-amino-acid chain: PWWP domain-containing protein 2B (590 aa).

4 disordered regions span residues 52-110 (APLP…PPLP), 182-347 (KSTL…EHEP), 360-398 (YLRD…PQGP), and 426-467 (DSLD…TVPP). The residue at position 84 (Ser-84) is a Phosphoserine. A compositionally biased stretch (pro residues) spans 99-110 (PEPPPPLVPPLP). Phosphoserine is present on residues Ser-186 and Ser-206. Basic and acidic residues predominate over residues 208–217 (PDRELRKPEE). Ser-250 bears the Phosphoserine mark. The segment covering 296–305 (VLDRESRDRP) has biased composition (basic and acidic residues). Residues 376–385 (GLADLSSGSS) are compositionally biased toward low complexity. A Phosphoserine modification is found at Ser-447. One can recognise a PWWP domain in the interval 490 to 550 (VGDIVWGKIH…ISKLSPFSEF (61 aa)).

Component of a MTA1-specific subcomplex of the NuRD complex composed of PWWP2B, MTA1 and HDAC1 but does not contain CHD4 and MBD3. Interacts with MTA1 and HDAC1. Interacts with MTA2, MTA3, HDAC2, RBBP4, RBBP7, BRCC3 and ZNF516. Does not interact with CHD4 and MBD3. Deubiquitinated by BRCC3; leading to its stabilization.

In terms of biological role, chromatin-binding protein that acts as an adapter between distinct nucleosome components (H3K36me3 or H2A.Z) and chromatin-modifying complexes, contributing to the regulation of the levels of histone acetylation at actively transcribed genes. Competes with CHD4 and MBD3 for interaction with MTA1 to form a NuRD subcomplex, preventing the formation of full NuRD complex (containing CHD4 and MBD3), leading to recruitment of HDACs to gene promoters resulting in turn in the deacetylation of nearby H3K27 and H2A.Z. Plays a role in facilitating transcriptional elongation through regulation of histone acetylation. Negatively regulates brown adipocyte thermogenesis by interacting with and stabilizing HDAC1 at the UCP1 gene promoter, thereby promoting histone deacetylation at the promoter leading to the repression of UCP1 expression. This chain is PWWP domain-containing protein 2B (PWWP2B), found in Homo sapiens (Human).